A 647-amino-acid chain; its full sequence is Chaperone protein HtpG (647 aa).

Residues 1–353 form an a; substrate-binding region; it reads MNAHVEQLEF…AQDMSLNVSR (353 aa). Residues 354–567 are b; the sequence is EILQQDRQIK…AFGMTPALAR (214 aa). Residues 568 to 647 form a c region; it reads IYRASGQEVP…LLAERLARTL (80 aa).

This sequence belongs to the heat shock protein 90 family. Homodimer.

The protein localises to the cytoplasm. Functionally, molecular chaperone. Has ATPase activity. The chain is Chaperone protein HtpG from Mycobacterium bovis (strain ATCC BAA-935 / AF2122/97).